A 107-amino-acid chain; its full sequence is Essential MCU regulator, mitochondrial (107 aa).

The N-terminal 52 residues, 1–52, are a transit peptide targeting the mitochondrion; that stretch reads MASGAARWLVLAPVRSGALRSGPSLRKDGDVSAAWSGSGRSLVPSRSVIVTR. The interval 1-52 is interaction with MAIP1; that stretch reads MASGAARWLVLAPVRSGALRSGPSLRKDGDVSAAWSGSGRSLVPSRSVIVTR. The Mitochondrial matrix segment spans residues 54-65; the sequence is GAILPKPVKMSF. The helical transmembrane segment at 66-85 threads the bilayer; sequence GLLRVFSIVIPFLYVGTLIS. Residues 81–85 carry the GXXXX[G/A/S] motif; the sequence is GTLIS. At 86 to 107 the chain is on the mitochondrial intermembrane side; that stretch reads KNFAALLEEHDIFVPEDDDDDD.

It belongs to the SMDT1/EMRE family. In terms of assembly, component of the uniplex complex, composed of MCU, EMRE/SMDT1, MICU1 and MICU2 (or MICU3) in a 4:4:1:1 stoichiometry. The number of EMRE/SMDT1 molecules is hovewer variable, ranging from 1 to 4 copies per uniplex complex, leading to uniplex complexes with distinct gatekeeping profiles. Interacts (via its C-terminal poly-Asp tail) with MCUR1; the interaction is direct. Unprocessed form interacts (via transit peptide) with MAIP1. Post-translationally, undergoes proteolytic degradation in neurons: degraded by AFG3L2 and SPG7 before SMDT1/EMRE assembly with the uniporter complex, limiting the availability of SMDT1/EMRE for MCU assembly and promoting efficient assembly of gatekeeper subunits with MCU.

It localises to the mitochondrion inner membrane. Essential regulatory subunit of the mitochondrial calcium uniporter complex (uniplex), a complex that mediates calcium uptake into mitochondria. Required to bridge the calcium-sensing proteins MICU1 with the calcium-conducting subunit MCU. Acts by mediating activation of MCU and retention of MICU1 to the MCU pore, in order to ensure tight regulation of the uniplex complex and appropriate responses to intracellular calcium signaling. This is Essential MCU regulator, mitochondrial from Homo sapiens (Human).